We begin with the raw amino-acid sequence, 269 residues long: Aegyptin-like protein (269 aa).

The N-terminal stretch at 1-19 is a signal peptide; that stretch reads MKLLLLLASVLCLALIVSA. The tract at residues 19 to 152 is disordered; sequence ARPSDETTDQ…GGAEGGEESP (134 aa). The tract at residues 38 to 148 is GE-rich region which mediates binding of Ca(2+); that stretch reads TSDSYHQEED…AGEEGGAEGG (111 aa). Composition is skewed to acidic residues over residues 56–73, 98–121, and 131–149; these read GTED…ESSS, GEED…EGGA, and GGAD…EGGE. A mediates binding of host collagen and inhibition of platelet aggregation region spans residues 148 to 269; that stretch reads GEESPVNTYH…DCIVEKRDSE (122 aa). Disulfide bonds link cysteine 208-cysteine 261 and cysteine 230-cysteine 239.

The protein belongs to the aegyptin family. Female saliva (at protein level). Distal lateral lobes of female salivary gland (at protein level). Low-level expression in male salivary gland. Not detected in female and male carcasses.

It localises to the secreted. Its function is as follows. Modulates blood feeding of female mosquitoes on vertebrate hosts. Inhibits collagen-induced platelet aggregation in the host via preventing collagen interaction with its ligands: glycoprotein VI and integrin alpha-2/beta-1 (ITGA2/ITGB1). Inhibits collagen-induced increase of Ca(2+) levels in host platelets. Binds to host collagens. Binds Ca(2+). Prevents a decrease in platelet count in the host blood after collagen injection. Functionally, (Microbial infection) Does not affect the development of Plasmodium berghei parasites in mosquitoes. In Anopheles stephensi (Indo-Pakistan malaria mosquito), this protein is Aegyptin-like protein.